The sequence spans 511 residues: Phosphoenolpyruvate carboxylase (511 aa).

Belongs to the PEPCase type 2 family. Homotetramer. Requires Mg(2+) as cofactor.

The catalysed reaction is oxaloacetate + phosphate = phosphoenolpyruvate + hydrogencarbonate. Functionally, catalyzes the irreversible beta-carboxylation of phosphoenolpyruvate (PEP) to form oxaloacetate (OAA), a four-carbon dicarboxylic acid source for the tricarboxylic acid cycle. The chain is Phosphoenolpyruvate carboxylase from Saccharolobus islandicus (strain L.S.2.15 / Lassen #1) (Sulfolobus islandicus).